A 123-amino-acid polypeptide reads, in one-letter code: Protein Rev (123 aa).

Residue serine 5 is modified to Phosphoserine; by host CK2. The homomultimerization stretch occupies residues 18-26 (IIKLLYQSS). Positions 25-50 (SSPCPNPRGSRQARKNRRRRWRARQR) are disordered. The Nuclear localization signal and RNA-binding (RRE) motif lies at 34–50 (SRQARKNRRRRWRARQR). Basic residues predominate over residues 35 to 49 (RQARKNRRRRWRARQ). A Nuclear export signal and binding to XPO1 motif is present at residues 73–84 (LQLPPIERLRLD). The tract at residues 86 to 123 (SESCGTSGTQQPQGTETGVGGPQISVESSAVLGSGTKN) is disordered. Residues 88–101 (SCGTSGTQQPQGTE) are compositionally biased toward polar residues. Serine 92 bears the Phosphoserine; by host mark.

Belongs to the HIV-1 REV protein family. As to quaternary structure, homomultimer; when bound to the RRE. Multimeric assembly is essential for activity and may involve XPO1. Binds to human KPNB1, XPO1, TNPO1, RANBP5 and IPO7. Interacts with the viral Integrase. Interacts with human KHDRBS1. Interacts with human NAP1; this interaction decreases Rev multimerization and stimulates its activity. Interacts with human DEAD-box helicases DDX3 and DDX24; these interactions may serve for viral RNA export to the cytoplasm and packaging, respectively. Interacts with human PSIP1; this interaction may inhibit HIV-1 DNA integration by promoting dissociation of the Integrase-LEDGF/p75 complex. Post-translationally, asymmetrically arginine dimethylated at one site by host PRMT6. Methylation impairs the RNA-binding activity and export of viral RNA from the nucleus to the cytoplasm. Phosphorylated by protein kinase CK2. Presence of, and maybe binding to the N-terminus of the regulatory beta subunit of CK2 is necessary for CK2-mediated Rev's phosphorylation.

The protein localises to the host nucleus. The protein resides in the host nucleolus. It is found in the host cytoplasm. Escorts unspliced or incompletely spliced viral pre-mRNAs (late transcripts) out of the nucleus of infected cells. These pre-mRNAs carry a recognition sequence called Rev responsive element (RRE) located in the env gene, that is not present in fully spliced viral mRNAs (early transcripts). This function is essential since most viral proteins are translated from unspliced or partially spliced pre-mRNAs which cannot exit the nucleus by the pathway used by fully processed cellular mRNAs. Rev itself is translated from a fully spliced mRNA that readily exits the nucleus. Rev's nuclear localization signal (NLS) binds directly to KPNB1/Importin beta-1 without previous binding to KPNA1/Importin alpha-1. KPNB1 binds to the GDP bound form of RAN (Ran-GDP) and targets Rev to the nucleus. In the nucleus, the conversion from Ran-GDP to Ran-GTP dissociates Rev from KPNB1 and allows Rev's binding to the RRE in viral pre-mRNAs. Rev multimerization on the RRE via cooperative assembly exposes its nuclear export signal (NES) to the surface. Rev can then form a complex with XPO1/CRM1 and Ran-GTP, leading to nuclear export of the complex. Conversion from Ran-GTP to Ran-GDP mediates dissociation of the Rev/RRE/XPO1/RAN complex, so that Rev can return to the nucleus for a subsequent round of export. Beside KPNB1, also seems to interact with TNPO1/Transportin-1, RANBP5/IPO5 and IPO7/RANBP7 for nuclear import. The nucleoporin-like HRB/RIP is an essential cofactor that probably indirectly interacts with Rev to release HIV RNAs from the perinuclear region to the cytoplasm. This is Protein Rev from Human immunodeficiency virus type 1 group M subtype A (isolate U455) (HIV-1).